Consider the following 116-residue polypeptide: Large ribosomal subunit protein uL18 (116 aa).

Belongs to the universal ribosomal protein uL18 family. As to quaternary structure, part of the 50S ribosomal subunit; part of the 5S rRNA/L5/L18/L25 subcomplex. Contacts the 5S and 23S rRNAs.

This is one of the proteins that bind and probably mediate the attachment of the 5S RNA into the large ribosomal subunit, where it forms part of the central protuberance. The protein is Large ribosomal subunit protein uL18 of Pseudomonas putida (strain W619).